The primary structure comprises 410 residues: Voltage-dependent chloride channel 1, chloroplastic (410 aa).

The Lumenal, thylakoid segment spans residues 1–110 (MYQSMNLSVS…RHLLSSFSSR (110 aa)). Residues 111–131 (VILSLIPPVFFFTSVAVVIAS) form a helical membrane-spanning segment. Topologically, residues 132-147 (YNSAVALDWLPGIFPI) are stromal. The chain crosses the membrane as a helical span at residues 148–168 (LRSSSLPYQLTAPALALLLVF). The Lumenal, thylakoid portion of the chain corresponds to 169–315 (RTEASYSRYE…PLSYTRLTSR (147 aa)). The next 2 helical transmembrane spans lie at 316-336 (FLVF…HWIV) and 337-357 (VPAT…GVLI). Topologically, residues 358–410 (EEPFPMLALDELCDLVHSNIQEAVKSEKVIRNRIIAKIKLHEFKHSSNGRHRS) are lumenal, thylakoid.

The protein belongs to the anion channel-forming bestrophin (TC 1.A.46) family. Voltage-dependent chloride channel subfamily. In terms of tissue distribution, mostly expressed in flowers and leaves and, to a lower extent, in stems and roots.

It is found in the plastid. The protein localises to the chloroplast thylakoid membrane. It carries out the reaction chloride(in) = chloride(out). Its activity is regulated as follows. More active at positive than at negative voltages. Repressed by the general anion channel inhibitors dithiocyanatostilbene-2,20-disulphonic acid (DIDS) and niflumic acid. In terms of biological role, voltage-dependent chloride (Cl) channel critical for proton motive force (PMF) partitioning across the thylakoid membrane by anion influx into the lumen during illumination, thus being required for photoprotection under fluctuating light conditions. Influences thylakoid ultrastructure, including lumen size and organization. During photosynthetic response on transition from dark to low light, involved in a sequential mechanism of adaptation; VCCN1 and CLCe first trigger the activation of photoprotection, which is later down-regulated by KEA3 to a low steady state, while adjusting electron transport. On transition from low to high light, accelerates the activation of photoprotection by building up a pH gradient across the thylakoid membrane. The protein is Voltage-dependent chloride channel 1, chloroplastic of Arabidopsis thaliana (Mouse-ear cress).